A 708-amino-acid chain; its full sequence is Meiotic sister-chromatid recombination protein 6, mitochondrial (708 aa).

Residues methionine 1–glycine 15 constitute a mitochondrion transit peptide. The segment covering glutamine 19–aspartate 36 has biased composition (polar residues). The interval glutamine 19–threonine 44 is disordered.

It is found in the mitochondrion. Its function is as follows. May be involved in the control of meiotic sister-chromatid recombination. The sequence is that of Meiotic sister-chromatid recombination protein 6, mitochondrial (MSC6) from Kluyveromyces lactis (strain ATCC 8585 / CBS 2359 / DSM 70799 / NBRC 1267 / NRRL Y-1140 / WM37) (Yeast).